We begin with the raw amino-acid sequence, 1590 residues long: Pentafunctional AROM polypeptide (1590 aa).

The segment at 1–400 (MSTANGSSPT…HEPKASSVDD (400 aa)) is 3-dehydroquinate synthase. NAD(+)-binding positions include 49 to 51 (DTN), 96 to 99 (EGSK), 127 to 129 (GGV), and aspartate 132. Arginine 143 provides a ligand contact to 7-phospho-2-dehydro-3-deoxy-D-arabino-heptonate. 152-153 (TT) serves as a coordination point for NAD(+). Positions 159 and 165 each coordinate 7-phospho-2-dehydro-3-deoxy-D-arabino-heptonate. Lysine 174 serves as a coordination point for NAD(+). 7-phospho-2-dehydro-3-deoxy-D-arabino-heptonate is bound at residue asparagine 175. NAD(+)-binding positions include 192–195 (FLNT) and asparagine 203. Glutamate 207 provides a ligand contact to Zn(2+). Residues 207 to 210 (EVIK) and lysine 266 each bind 7-phospho-2-dehydro-3-deoxy-D-arabino-heptonate. Glutamate 276 functions as the Proton acceptor; for 3-dehydroquinate synthase activity in the catalytic mechanism. Residues 280-284 (RNLLN) and histidine 287 contribute to the 7-phospho-2-dehydro-3-deoxy-D-arabino-heptonate site. Residue histidine 287 participates in Zn(2+) binding. The Proton acceptor; for 3-dehydroquinate synthase activity role is filled by histidine 291. 7-phospho-2-dehydro-3-deoxy-D-arabino-heptonate contacts are provided by histidine 303 and lysine 372. A Zn(2+)-binding site is contributed by histidine 303. The tract at residues 413–856 (VQPGVRPGLK…WDVLSGVFGV (444 aa)) is EPSP synthase. Cysteine 838 (for EPSP synthase activity) is an active-site residue. Residues 876 to 1070 (NRSVFVIGMR…KAKPHSFFVS (195 aa)) are shikimate kinase. 883-890 (GMRGAGKS) lines the ATP pocket. The 3-dehydroquinase stretch occupies residues 1071–1285 (LTVPNITAHT…AAPGQLTAAE (215 aa)). Catalysis depends on histidine 1187, which acts as the Proton acceptor; for 3-dehydroquinate dehydratase activity. Residue lysine 1215 is the Schiff-base intermediate with substrate; for 3-dehydroquinate dehydratase activity of the active site. Positions 1298 to 1590 (KRKFYLFGKP…IVMNGTSDSS (293 aa)) are shikimate dehydrogenase.

It in the N-terminal section; belongs to the sugar phosphate cyclases superfamily. Dehydroquinate synthase family. This sequence in the 2nd section; belongs to the EPSP synthase family. In the 3rd section; belongs to the shikimate kinase family. The protein in the 4th section; belongs to the type-I 3-dehydroquinase family. It in the C-terminal section; belongs to the shikimate dehydrogenase family. Homodimer. Zn(2+) is required as a cofactor.

It is found in the cytoplasm. The catalysed reaction is 7-phospho-2-dehydro-3-deoxy-D-arabino-heptonate = 3-dehydroquinate + phosphate. The enzyme catalyses 3-dehydroquinate = 3-dehydroshikimate + H2O. It carries out the reaction shikimate + NADP(+) = 3-dehydroshikimate + NADPH + H(+). It catalyses the reaction shikimate + ATP = 3-phosphoshikimate + ADP + H(+). The catalysed reaction is 3-phosphoshikimate + phosphoenolpyruvate = 5-O-(1-carboxyvinyl)-3-phosphoshikimate + phosphate. The protein operates within metabolic intermediate biosynthesis; chorismate biosynthesis; chorismate from D-erythrose 4-phosphate and phosphoenolpyruvate: step 2/7. It functions in the pathway metabolic intermediate biosynthesis; chorismate biosynthesis; chorismate from D-erythrose 4-phosphate and phosphoenolpyruvate: step 3/7. It participates in metabolic intermediate biosynthesis; chorismate biosynthesis; chorismate from D-erythrose 4-phosphate and phosphoenolpyruvate: step 4/7. Its pathway is metabolic intermediate biosynthesis; chorismate biosynthesis; chorismate from D-erythrose 4-phosphate and phosphoenolpyruvate: step 5/7. The protein operates within metabolic intermediate biosynthesis; chorismate biosynthesis; chorismate from D-erythrose 4-phosphate and phosphoenolpyruvate: step 6/7. Its function is as follows. The AROM polypeptide catalyzes 5 consecutive enzymatic reactions in prechorismate polyaromatic amino acid biosynthesis. The protein is Pentafunctional AROM polypeptide of Pyricularia oryzae (strain 70-15 / ATCC MYA-4617 / FGSC 8958) (Rice blast fungus).